We begin with the raw amino-acid sequence, 156 residues long: SsrA-binding protein (156 aa).

A disordered region spans residues 134-156 (YDKRETLKRKEQDREMARALRKR).

It belongs to the SmpB family.

The protein localises to the cytoplasm. Its function is as follows. Required for rescue of stalled ribosomes mediated by trans-translation. Binds to transfer-messenger RNA (tmRNA), required for stable association of tmRNA with ribosomes. tmRNA and SmpB together mimic tRNA shape, replacing the anticodon stem-loop with SmpB. tmRNA is encoded by the ssrA gene; the 2 termini fold to resemble tRNA(Ala) and it encodes a 'tag peptide', a short internal open reading frame. During trans-translation Ala-aminoacylated tmRNA acts like a tRNA, entering the A-site of stalled ribosomes, displacing the stalled mRNA. The ribosome then switches to translate the ORF on the tmRNA; the nascent peptide is terminated with the 'tag peptide' encoded by the tmRNA and targeted for degradation. The ribosome is freed to recommence translation, which seems to be the essential function of trans-translation. This is SsrA-binding protein from Latilactobacillus sakei subsp. sakei (strain 23K) (Lactobacillus sakei subsp. sakei).